Reading from the N-terminus, the 120-residue chain is Large ribosomal subunit protein uL18 (120 aa).

The tract at residues 1–26 is disordered; sequence MKLTRRESKQRRHRRVRGKVQGSPER. A compositionally biased stretch (basic residues) spans 8–18; that stretch reads SKQRRHRRVRG.

This sequence belongs to the universal ribosomal protein uL18 family. As to quaternary structure, part of the 50S ribosomal subunit; part of the 5S rRNA/L5/L18/L25 subcomplex. Contacts the 5S and 23S rRNAs.

Functionally, this is one of the proteins that bind and probably mediate the attachment of the 5S RNA into the large ribosomal subunit, where it forms part of the central protuberance. The protein is Large ribosomal subunit protein uL18 of Trichormus variabilis (strain ATCC 29413 / PCC 7937) (Anabaena variabilis).